The sequence spans 267 residues: 2-dehydro-3-deoxyphosphooctonate aldolase (267 aa).

Belongs to the KdsA family.

Its subcellular location is the cytoplasm. The catalysed reaction is D-arabinose 5-phosphate + phosphoenolpyruvate + H2O = 3-deoxy-alpha-D-manno-2-octulosonate-8-phosphate + phosphate. It functions in the pathway carbohydrate biosynthesis; 3-deoxy-D-manno-octulosonate biosynthesis; 3-deoxy-D-manno-octulosonate from D-ribulose 5-phosphate: step 2/3. Its pathway is bacterial outer membrane biogenesis; lipopolysaccharide biosynthesis. The polypeptide is 2-dehydro-3-deoxyphosphooctonate aldolase (Campylobacter jejuni subsp. doylei (strain ATCC BAA-1458 / RM4099 / 269.97)).